We begin with the raw amino-acid sequence, 119 residues long: UPF0145 protein Bcep18194_B0595 (119 aa).

It belongs to the UPF0145 family.

The protein is UPF0145 protein Bcep18194_B0595 of Burkholderia lata (strain ATCC 17760 / DSM 23089 / LMG 22485 / NCIMB 9086 / R18194 / 383).